Consider the following 530-residue polypeptide: CTP synthase (530 aa).

Residues 1 to 264 (MPKLIIVTGG…GDFLTRRLRL (264 aa)) form an amidoligase domain region. S13 lines the CTP pocket. Residue S13 participates in UTP binding. Residue 14 to 19 (GVGKGV) coordinates ATP. Position 54 (Y54) interacts with L-glutamine. Residue D71 participates in ATP binding. D71 and E139 together coordinate Mg(2+). Residues 146 to 148 (DYE), 185 to 190 (KTKPLQ), and K221 contribute to the CTP site. Residues 185-190 (KTKPLQ) and K221 contribute to the UTP site. In terms of domain architecture, Glutamine amidotransferase type-1 spans 289–530 (SVGMCGKYVE…LLKAALFAKR (242 aa)). L-glutamine is bound at residue G351. C378 (nucleophile; for glutamine hydrolysis) is an active-site residue. L-glutamine is bound by residues 379-382 (FGMQ), E402, and R459. Active-site residues include H504 and E506.

This sequence belongs to the CTP synthase family. As to quaternary structure, homotetramer.

The catalysed reaction is UTP + L-glutamine + ATP + H2O = CTP + L-glutamate + ADP + phosphate + 2 H(+). The enzyme catalyses L-glutamine + H2O = L-glutamate + NH4(+). It carries out the reaction UTP + NH4(+) + ATP = CTP + ADP + phosphate + 2 H(+). It participates in pyrimidine metabolism; CTP biosynthesis via de novo pathway; CTP from UDP: step 2/2. With respect to regulation, allosterically activated by GTP, when glutamine is the substrate; GTP has no effect on the reaction when ammonia is the substrate. The allosteric effector GTP functions by stabilizing the protein conformation that binds the tetrahedral intermediate(s) formed during glutamine hydrolysis. Inhibited by the product CTP, via allosteric rather than competitive inhibition. Functionally, catalyzes the ATP-dependent amination of UTP to CTP with either L-glutamine or ammonia as the source of nitrogen. Regulates intracellular CTP levels through interactions with the four ribonucleotide triphosphates. This Pyrobaculum aerophilum (strain ATCC 51768 / DSM 7523 / JCM 9630 / CIP 104966 / NBRC 100827 / IM2) protein is CTP synthase.